A 636-amino-acid chain; its full sequence is Epsin-3 (636 aa).

Arginine 8, lysine 11, arginine 25, asparagine 30, arginine 63, and histidine 73 together coordinate a 1,2-diacyl-sn-glycero-3-phospho-(1D-myo-inositol-4,5-bisphosphate). Residues 12 to 144 enclose the ENTH domain; sequence NIVHNYSEAE…KDEERLRQER (133 aa). The segment at 153–503 is disordered; it reads RMALEGMGIG…TPESFLGPSA (351 aa). A compositionally biased stretch (low complexity) spans 174–189; that stretch reads GSPSSYTSASSSPRYA. Phosphoserine is present on residues serine 184 and serine 185. 2 UIM domains span residues 202 to 221 and 229 to 248; these read EEELQLQLALAMSREEAERP and DEDLQLQLALSLSRQEHEKG. Basic and acidic residues-rich tracts occupy residues 214-231 and 242-256; these read SREEAERPVPPASHRDED and RQEHEKGVRSWKGDD. Phosphoserine is present on serine 257. Over residues 270 to 288 the composition is skewed to basic and acidic residues; that stretch reads RQRDREPEREERKEEEKLK. 5 consecutive repeat copies span residues 315 to 317, 338 to 340, 365 to 367, 381 to 383, and 398 to 400. Positions 315–400 are 5 X 3 AA repeats of [DE]-P-W; the sequence is DPWDIPGLRP…KLPSTGADPW (86 aa). Residues 426 to 435 are compositionally biased toward basic and acidic residues; that stretch reads ESTEPKESRD. Repeat copies occupy residues 523–525 and 536–538. The interval 523–635 is 3 X 3 AA repeats of N-P-F; it reads NPFLTGLGVP…LPPQAGTNPF (113 aa). Residues 607 to 616 are compositionally biased toward pro residues; it reads PPPASLPQPL. Residues 607–636 form a disordered region; it reads PPPASLPQPLLPTSGPMGPLPPQAGTNPFL. The stretch at 633-635 is repeat 3; it reads NPF.

Belongs to the epsin family.

It localises to the cytoplasm. The protein resides in the cell cortex. Its subcellular location is the perinuclear region. It is found in the cytoplasmic vesicle. The protein localises to the clathrin-coated vesicle. This chain is Epsin-3 (Epn3), found in Mus musculus (Mouse).